Consider the following 128-residue polypeptide: Sulfurtransferase TusD (128 aa).

The active-site Cysteine persulfide intermediate is the Cys78.

This sequence belongs to the DsrE/TusD family. Heterohexamer, formed by a dimer of trimers. The hexameric TusBCD complex contains 2 copies each of TusB, TusC and TusD. The TusBCD complex interacts with TusE.

The protein localises to the cytoplasm. Functionally, part of a sulfur-relay system required for 2-thiolation of 5-methylaminomethyl-2-thiouridine (mnm(5)s(2)U) at tRNA wobble positions. Accepts sulfur from TusA and transfers it in turn to TusE. The polypeptide is Sulfurtransferase TusD (Buchnera aphidicola subsp. Acyrthosiphon pisum (strain 5A)).